The chain runs to 463 residues: Probable Xaa-Pro aminopeptidase pepP (463 aa).

Mn(2+) is bound by residues Asp259, Asp270, Glu393, and Glu433.

The protein belongs to the peptidase M24B family. Mn(2+) serves as cofactor.

It catalyses the reaction Release of any N-terminal amino acid, including proline, that is linked to proline, even from a dipeptide or tripeptide.. In terms of biological role, catalyzes the removal of a penultimate prolyl residue from the N-termini of peptides. The protein is Probable Xaa-Pro aminopeptidase pepP (pepP) of Pyrenophora teres f. teres (strain 0-1) (Barley net blotch fungus).